Reading from the N-terminus, the 152-residue chain is D-aminoacyl-tRNA deacylase (152 aa).

A Gly-cisPro motif, important for rejection of L-amino acids motif is present at residues 142–143 (GP).

It belongs to the DTD family. As to quaternary structure, homodimer.

It localises to the cytoplasm. The enzyme catalyses glycyl-tRNA(Ala) + H2O = tRNA(Ala) + glycine + H(+). It catalyses the reaction a D-aminoacyl-tRNA + H2O = a tRNA + a D-alpha-amino acid + H(+). Functionally, an aminoacyl-tRNA editing enzyme that deacylates mischarged D-aminoacyl-tRNAs. Also deacylates mischarged glycyl-tRNA(Ala), protecting cells against glycine mischarging by AlaRS. Acts via tRNA-based rather than protein-based catalysis; rejects L-amino acids rather than detecting D-amino acids in the active site. By recycling D-aminoacyl-tRNA to D-amino acids and free tRNA molecules, this enzyme counteracts the toxicity associated with the formation of D-aminoacyl-tRNA entities in vivo and helps enforce protein L-homochirality. This is D-aminoacyl-tRNA deacylase from Burkholderia ambifaria (strain ATCC BAA-244 / DSM 16087 / CCUG 44356 / LMG 19182 / AMMD) (Burkholderia cepacia (strain AMMD)).